The sequence spans 333 residues: Homocysteine S-methyltransferase 2 (333 aa).

The 320-residue stretch at 8–327 (SMKDFLKQTG…TTIRAIHKRL (320 aa)) folds into the Hcy-binding domain. Residues Cys-245, Cys-312, and Cys-313 each contribute to the Zn(2+) site.

As to quaternary structure, monomer. It depends on Zn(2+) as a cofactor. Expressed predominantly in roots. Expressed in rosette leaves, cauline leaves and developing seeds.

The enzyme catalyses S-methyl-L-methionine + L-homocysteine = 2 L-methionine + H(+). Functionally, catalyzes methyl transfer from S-methylmethionine (SMM) to adenosyl-L-homocysteine (AdoMet). SMM degradation (by HMT-1, HMT-2 and HMT-3) and biosynthesis (by MMT1) constitute the SMM cycle in plants, which is probably required to achieve short term control of AdoMet level. This is Homocysteine S-methyltransferase 2 (HMT-2) from Arabidopsis thaliana (Mouse-ear cress).